We begin with the raw amino-acid sequence, 731 residues long: 1,4-alpha-glucan branching enzyme GlgB (731 aa).

D412 serves as the catalytic Nucleophile. E465 serves as the catalytic Proton donor.

This sequence belongs to the glycosyl hydrolase 13 family. GlgB subfamily. As to quaternary structure, monomer.

It catalyses the reaction Transfers a segment of a (1-&gt;4)-alpha-D-glucan chain to a primary hydroxy group in a similar glucan chain.. The protein operates within glycan biosynthesis; glycogen biosynthesis. Catalyzes the formation of the alpha-1,6-glucosidic linkages in glycogen by scission of a 1,4-alpha-linked oligosaccharide from growing alpha-1,4-glucan chains and the subsequent attachment of the oligosaccharide to the alpha-1,6 position. This is 1,4-alpha-glucan branching enzyme GlgB from Bordetella parapertussis (strain 12822 / ATCC BAA-587 / NCTC 13253).